The primary structure comprises 67 residues: Large ribosomal subunit protein bL35 (67 aa).

This sequence belongs to the bacterial ribosomal protein bL35 family.

This Gloeothece citriformis (strain PCC 7424) (Cyanothece sp. (strain PCC 7424)) protein is Large ribosomal subunit protein bL35.